Consider the following 137-residue polypeptide: Structural protein A137R (137 aa).

This sequence belongs to the asfivirus A137R family. In terms of assembly, interacts with host TBK1.

It is found in the virion. Its subcellular location is the host cytoplasm. Functionally, plays a role in the inhibition of the host innate immune response. Mechanistically, promotes the autophagy-mediated lysosomal degradation of host TBK1 and affects IRF3 nuclear translocation to block type I IFN production. The protein is Structural protein A137R of Ornithodoros (relapsing fever ticks).